Here is a 179-residue protein sequence, read N- to C-terminus: M-phase-specific PLK1-interacting protein (179 aa).

Residues M1 to E135 form a disordered region. R37 carries the asymmetric dimethylarginine modification. 2 positions are modified to phosphoserine: S40 and S47. The residue at position 51 (T51) is a Phosphothreonine. R57 is subject to Omega-N-methylarginine. 2 positions are modified to asymmetric dimethylarginine: R59 and R68. The segment covering P60 to G71 has biased composition (low complexity). S72 carries the post-translational modification Phosphoserine. R77 carries the asymmetric dimethylarginine modification. The segment covering G79–Q109 has biased composition (low complexity). A phosphoserine mark is found at S80, S82, S93, S104, and S115. The segment covering T110–F122 has biased composition (polar residues). Residue R117 is modified to Omega-N-methylarginine. T120 is subject to Phosphothreonine. A phosphoserine mark is found at S124 and S133.

As to quaternary structure, interacts with PLK1; phosphorylation-dependent. In terms of processing, phosphorylated during mitosis in the cell cycle probably by CDK1. Expressed at highest levels in liver and kidney; intermediate expression in skeletal muscle, pancreas, heart and placenta; low expression in brain and lung. Expressed in epidermis and hair follicles.

It localises to the nucleus. The protein resides in the cytoplasm. It is found in the cytoskeleton. Its subcellular location is the microtubule organizing center. The protein localises to the centrosome. Functionally, may play a role in maintenance of cell cycle integrity by regulating mitosis or cytokinesis. In Homo sapiens (Human), this protein is M-phase-specific PLK1-interacting protein (MPLKIP).